The following is a 294-amino-acid chain: GTPase Era (294 aa).

The Era-type G domain occupies 4 to 170; the sequence is KSGFVSVIGR…VEEIFTFLPE (167 aa). The segment at 12 to 19 is G1; sequence GRPNVGKS. 12–19 contributes to the GTP binding site; that stretch reads GRPNVGKS. The segment at 38–42 is G2; it reads QTTRN. Positions 59 to 62 are G3; sequence DTPG. Residues 59-63 and 121-124 each bind GTP; these read DTPGI and NKID. Residues 121–124 form a G4 region; that stretch reads NKID. Residues 149–151 are G5; the sequence is ISA. A KH type-2 domain is found at 201 to 278; the sequence is TREEVPYGVA…YLDLWVKIEK (78 aa).

The protein belongs to the TRAFAC class TrmE-Era-EngA-EngB-Septin-like GTPase superfamily. Era GTPase family. Monomer.

Its subcellular location is the cytoplasm. The protein localises to the cell inner membrane. In terms of biological role, an essential GTPase that binds both GDP and GTP, with rapid nucleotide exchange. Plays a role in 16S rRNA processing and 30S ribosomal subunit biogenesis and possibly also in cell cycle regulation and energy metabolism. This Halothermothrix orenii (strain H 168 / OCM 544 / DSM 9562) protein is GTPase Era.